The following is a 169-amino-acid chain: Ribosome maturation factor RimM (169 aa).

A PRC barrel domain is found at glutamate 97 to tyrosine 169.

It belongs to the RimM family. As to quaternary structure, binds ribosomal protein uS19.

The protein resides in the cytoplasm. An accessory protein needed during the final step in the assembly of 30S ribosomal subunit, possibly for assembly of the head region. Essential for efficient processing of 16S rRNA. May be needed both before and after RbfA during the maturation of 16S rRNA. It has affinity for free ribosomal 30S subunits but not for 70S ribosomes. The sequence is that of Ribosome maturation factor RimM from Neisseria gonorrhoeae (strain ATCC 700825 / FA 1090).